The chain runs to 368 residues: 3-dehydroquinate synthase (368 aa).

Residues 112-116 (GVVGD), 136-137 (TT), Lys-149, Lys-158, and 176-179 (FLDT) contribute to the NAD(+) site. The Zn(2+) site is built by Glu-191, His-257, and His-274.

Belongs to the sugar phosphate cyclases superfamily. Dehydroquinate synthase family. Requires Co(2+) as cofactor. The cofactor is Zn(2+). It depends on NAD(+) as a cofactor.

It localises to the cytoplasm. The catalysed reaction is 7-phospho-2-dehydro-3-deoxy-D-arabino-heptonate = 3-dehydroquinate + phosphate. Its pathway is metabolic intermediate biosynthesis; chorismate biosynthesis; chorismate from D-erythrose 4-phosphate and phosphoenolpyruvate: step 2/7. Its function is as follows. Catalyzes the conversion of 3-deoxy-D-arabino-heptulosonate 7-phosphate (DAHP) to dehydroquinate (DHQ). In Natranaerobius thermophilus (strain ATCC BAA-1301 / DSM 18059 / JW/NM-WN-LF), this protein is 3-dehydroquinate synthase.